A 253-amino-acid polypeptide reads, in one-letter code: Small ribosomal subunit protein uS2 (253 aa).

The interval Q226–E253 is disordered. The segment covering E239–E253 has biased composition (acidic residues).

It belongs to the universal ribosomal protein uS2 family.

The protein is Small ribosomal subunit protein uS2 of Lactobacillus delbrueckii subsp. bulgaricus (strain ATCC 11842 / DSM 20081 / BCRC 10696 / JCM 1002 / NBRC 13953 / NCIMB 11778 / NCTC 12712 / WDCM 00102 / Lb 14).